The primary structure comprises 421 residues: Serine hydroxymethyltransferase (421 aa).

(6S)-5,6,7,8-tetrahydrofolate contacts are provided by residues leucine 121 and 125 to 127; that span reads GHL. Lysine 230 is modified (N6-(pyridoxal phosphate)lysine).

It belongs to the SHMT family. As to quaternary structure, homodimer. Pyridoxal 5'-phosphate serves as cofactor.

It localises to the cytoplasm. The enzyme catalyses (6R)-5,10-methylene-5,6,7,8-tetrahydrofolate + glycine + H2O = (6S)-5,6,7,8-tetrahydrofolate + L-serine. It functions in the pathway one-carbon metabolism; tetrahydrofolate interconversion. It participates in amino-acid biosynthesis; glycine biosynthesis; glycine from L-serine: step 1/1. Its function is as follows. Catalyzes the reversible interconversion of serine and glycine with tetrahydrofolate (THF) serving as the one-carbon carrier. This reaction serves as the major source of one-carbon groups required for the biosynthesis of purines, thymidylate, methionine, and other important biomolecules. Also exhibits THF-independent aldolase activity toward beta-hydroxyamino acids, producing glycine and aldehydes, via a retro-aldol mechanism. In Carboxydothermus hydrogenoformans (strain ATCC BAA-161 / DSM 6008 / Z-2901), this protein is Serine hydroxymethyltransferase.